The following is a 246-amino-acid chain: 3'(2'),5'-bisphosphate nucleotidase CysQ (246 aa).

Residues glutamate 64, aspartate 83, leucine 85, aspartate 86, and aspartate 205 each contribute to the Mg(2+) site. Glutamate 64 contacts substrate. Substrate-binding positions include 85–88 (LDGT) and aspartate 205.

It belongs to the inositol monophosphatase superfamily. CysQ family. Mg(2+) serves as cofactor.

It localises to the cell inner membrane. It catalyses the reaction adenosine 3',5'-bisphosphate + H2O = AMP + phosphate. With respect to regulation, inhibited by lithium and calcium. In terms of biological role, converts adenosine-3',5'-bisphosphate (PAP) to AMP. May also convert adenosine 3'-phosphate 5'-phosphosulfate (PAPS) to adenosine 5'-phosphosulfate (APS). Has 10000-fold lower activity towards inositol 1,4-bisphosphate (Ins(1,4)P2). The polypeptide is 3'(2'),5'-bisphosphate nucleotidase CysQ (Escherichia coli (strain K12)).